Reading from the N-terminus, the 800-residue chain is MSRRRAHDTEDEGYDHRRNKRRRVSENQEIEDRLESLILRVGERSTSSVESNLEGLVSVLEADLGTFRLKILRILSDCAVRMPEKCTVYTTLVGLLNAKNYKFGGEFVDHMVKTFKESLKMCRWDAARYSLRFLADLVNCHVISATSLLQLLDTMIDVSNEDTVPQVRRDWFVFAVLSTLPWVGRDLYEKKESALESLLLRIEVYLNKRSKKHHNALRVWSSDAPHPQEEYLDCLWAQIRKLRQDNWAEKHIPRPYLTFDTILCEALQHNLPQIIPPPHNDAFVYPMPWVVYRMFDYTDCPDGPNLPGAHSIERFLIEEHLHHIIETYHHERKDCAAQLLSFPFKHKIPLEYCIVEVIFAELFHMPTPRYLDICYGSILIELCKLQPATLPQVLAQATEILFMRIDSMNTSCFDRFVNWFSYHLSNFKFTWSWDEWDSCLLLDGEHPRPKFIQEVLQKCLRLSYHQRITEMMPTTYGKLIPQVPVPNFKYASEEAASLPGTAVAHQLVVAIRQKCSPEEVVNILKEIPNSGYSGEEMSDGTFNALKIDVFVQTLLNLGSKSFSHSFAAISKFHSVFRALAETEEAQICVLHNIYELWSSHQQMMVVLVDKLLKLQIVDCSAVATWIFSKEMTSEFTKMYLWEILHLTIKKMNKHVIKLNTELSVAKDKLSKADSSSSESDEDAPTKRKKPITHADKPSEEAVERMEEKLEAANVNQKRLFLIVFQRFIMILSEHMLRSDTDGRDPDTDWYRWTIGRLQQVFLMHHEQVQKYSSTLETLLFTSDLDTHILEVFQQFVALRA.

The segment at 1–26 is disordered; it reads MSRRRAHDTEDEGYDHRRNKRRRVSE. Thr-9 carries the phosphothreonine modification. In terms of domain architecture, MIF4G spans 31–243; it reads EDRLESLILR…CLWAQIRKLR (213 aa). Residues 669-704 form a disordered region; that stretch reads LSKADSSSSESDEDAPTKRKKPITHADKPSEEAVER. Residues 692-704 are compositionally biased toward basic and acidic residues; that stretch reads THADKPSEEAVER.

It belongs to the NCBP1 family. As to quaternary structure, component of the nuclear cap-binding complex (CBC), a heterodimer composed of Cbp80 and Cbp20 that interacts with m7GpppG-capped RNA.

The protein resides in the nucleus. Component of the cap-binding complex (CBC), which binds cotranscriptionally to the 5'-cap of pre-mRNAs and is involved in various processes such as pre-mRNA splicing and RNA-mediated gene silencing (RNAi). The CBC complex is involved in miRNA-mediated RNA interference via its interaction with Ars2 and is required for primary microRNAs (miRNAs) processing. Also involved in innate immunity via the short interfering RNAs (siRNAs) processing machinery by restricting the viral RNA production. In the CBC complex, Cbp80 does not bind directly capped RNAs (m7GpppG-capped RNA) but is required to stabilize the movement of the N-terminal loop of Cbp20 and lock the CBC into a high affinity cap-binding state with the cap structure. This is Nuclear cap-binding protein subunit 1 (Cbp80) from Drosophila persimilis (Fruit fly).